The following is a 187-amino-acid chain: Elongation factor P (187 aa).

This sequence belongs to the elongation factor P family.

Its subcellular location is the cytoplasm. Its pathway is protein biosynthesis; polypeptide chain elongation. Involved in peptide bond synthesis. Stimulates efficient translation and peptide-bond synthesis on native or reconstituted 70S ribosomes in vitro. Probably functions indirectly by altering the affinity of the ribosome for aminoacyl-tRNA, thus increasing their reactivity as acceptors for peptidyl transferase. In Arthrobacter sp. (strain FB24), this protein is Elongation factor P.